The chain runs to 1370 residues: Zinc finger MYM-type protein 3 (1370 aa).

2 stretches are compositionally biased toward low complexity: residues 1–12 (MDPSDFPSPFDP) and 52–61 (PSSGALDLLD). Disordered regions lie at residues 1–72 (MDPS…DPGV) and 90–301 (PSPP…QRAG). Positions 230-253 (ASEKPPERKRSERVRRAEPPKPEV) are enriched in basic and acidic residues. A phosphoserine mark is found at Ser263 and Ser267. Acidic residues predominate over residues 263 to 279 (SDEDSDAMVDDPNDEDF). Glycyl lysine isopeptide (Lys-Gly) (interchain with G-Cter in SUMO2) cross-links involve residues Lys308, Lys320, and Lys328. 9 consecutive MYM-type zinc fingers follow at residues 332–366 (QLFCSSSCLTTFSKKPSGKKTCTFCKKEIWNTKDS), 378–422 (HEFC…LHEV), 429–464 (HRLCSDSCFSKFRANKGLKTNCCDQCGAYIYTKTGS), 477–511 (KRFCNTTCLGAYKKKNTRVYPCVWCKTLCKNFEML), 521–559 (SLFCSLCCTTSYKVKQAGLTGPPRPCSFCRRSLSDPCYY), 567–604 (YQFCSPSCWTKFQRTSPEGGIHLSCHYCHSLFSGKPEV), 612–646 (FQFCCRDCCEDFKRLRGVVSQCEHCRQEKLLHEKL), 653–692 (KSFCSEGCVLLYKQDFTKKLGLCCITCTYCSQTCQRGVTE), and 699–733 (WDFCSEDCKSKYLLWYCKAARCHACKRQGKLLETI). Position 464 is a phosphoserine (Ser464). The span at 759–794 (NLDTQSGPESLLNSQSPESKPQTPSQTKVENSNTVR) shows a compositional bias: polar residues. Residues 759 to 830 (NLDTQSGPES…PPPPATPRKN (72 aa)) form a disordered region. Residues Lys778 and Lys786 each participate in a glycyl lysine isopeptide (Lys-Gly) (interchain with G-Cter in SUMO2) cross-link. The residue at position 795 (Thr795) is a Phosphothreonine. Lys804 participates in a covalent cross-link: Glycyl lysine isopeptide (Lys-Gly) (interchain with G-Cter in SUMO2). A compositionally biased stretch (pro residues) spans 815 to 826 (APTPPPPPPPAT). Thr817 and Thr826 each carry phosphothreonine. Residues Lys847, Lys861, Lys920, and Lys1275 each participate in a glycyl lysine isopeptide (Lys-Gly) (interchain with G-Cter in SUMO2) cross-link.

As to quaternary structure, may be a component of a BHC histone deacetylase complex that contains HDAC1, HDAC2, HMG20B/BRAF35, KDM1A, RCOR1/CoREST, PHF21A/BHC80, ZMYM2, ZNF217, ZMYM3, GSE1 and GTF2I. In terms of tissue distribution, most abundant in brain, moderate in muscle and heart, low in other tissues except placenta.

Its subcellular location is the nucleus. Functionally, plays a role in the regulation of cell morphology and cytoskeletal organization. The sequence is that of Zinc finger MYM-type protein 3 (ZMYM3) from Homo sapiens (Human).